A 540-amino-acid chain; its full sequence is NADH-ubiquinone oxidoreductase chain 4 (540 aa).

14 helical membrane passes run 2–22 (TIIA…GVIL), 35–55 (IFIL…LIGC), 89–109 (ISAI…LISI), 118–138 (QKFQ…FAAT), 140–160 (LVQL…MIGV), 172–192 (FQIL…IGIL), 218–238 (LIFI…PLHL), 248–268 (PTAG…YGYI), 282–302 (YFPI…IATL), 310–330 (IVAY…FSGV), 338–358 (IILM…IGVI), 376–396 (VMPI…AFPI), 415–435 (IIIA…SFWL), and 501–521 (VNIF…IIGM).

The protein belongs to the complex I subunit 4 family.

It is found in the mitochondrion membrane. It catalyses the reaction a ubiquinone + NADH + 5 H(+)(in) = a ubiquinol + NAD(+) + 4 H(+)(out). Functionally, core subunit of the mitochondrial membrane respiratory chain NADH dehydrogenase (Complex I) that is believed to belong to the minimal assembly required for catalysis. Complex I functions in the transfer of electrons from NADH to the respiratory chain. The immediate electron acceptor for the enzyme is believed to be ubiquinone. The polypeptide is NADH-ubiquinone oxidoreductase chain 4 (nad4) (Dictyostelium discoideum (Social amoeba)).